A 465-amino-acid polypeptide reads, in one-letter code: Poly(A) polymerase I (465 aa).

Catalysis depends on residues Asp80, Asp82, and Asp162. The segment at 429–465 (SAPPDQKGMLNELDEEPSPRRRTRRPRKRAPRREGTA) is disordered. Basic residues predominate over residues 448-459 (RRRTRRPRKRAP).

The protein belongs to the tRNA nucleotidyltransferase/poly(A) polymerase family.

It carries out the reaction RNA(n) + ATP = RNA(n)-3'-adenine ribonucleotide + diphosphate. Its function is as follows. Adds poly(A) tail to the 3' end of many RNAs, which usually targets these RNAs for decay. Plays a significant role in the global control of gene expression, through influencing the rate of transcript degradation, and in the general RNA quality control. The sequence is that of Poly(A) polymerase I from Escherichia coli O157:H7.